Here is a 37-residue protein sequence, read N- to C-terminus: Cytochrome b6-f complex subunit 5 (37 aa).

A helical transmembrane segment spans residues 5–25 (LLSGIVLGLIPITLFGLLVAA).

It belongs to the PetG family. In terms of assembly, the 4 large subunits of the cytochrome b6-f complex are cytochrome b6, subunit IV (17 kDa polypeptide, PetD), cytochrome f and the Rieske protein, while the 4 small subunits are PetG, PetL, PetM and PetN. The complex functions as a dimer.

It is found in the plastid. The protein resides in the chloroplast thylakoid membrane. Functionally, component of the cytochrome b6-f complex, which mediates electron transfer between photosystem II (PSII) and photosystem I (PSI), cyclic electron flow around PSI, and state transitions. PetG is required for either the stability or assembly of the cytochrome b6-f complex. This chain is Cytochrome b6-f complex subunit 5, found in Pyropia yezoensis (Susabi-nori).